The chain runs to 154 residues: SsrA-binding protein (154 aa).

Belongs to the SmpB family.

The protein localises to the cytoplasm. Required for rescue of stalled ribosomes mediated by trans-translation. Binds to transfer-messenger RNA (tmRNA), required for stable association of tmRNA with ribosomes. tmRNA and SmpB together mimic tRNA shape, replacing the anticodon stem-loop with SmpB. tmRNA is encoded by the ssrA gene; the 2 termini fold to resemble tRNA(Ala) and it encodes a 'tag peptide', a short internal open reading frame. During trans-translation Ala-aminoacylated tmRNA acts like a tRNA, entering the A-site of stalled ribosomes, displacing the stalled mRNA. The ribosome then switches to translate the ORF on the tmRNA; the nascent peptide is terminated with the 'tag peptide' encoded by the tmRNA and targeted for degradation. The ribosome is freed to recommence translation, which seems to be the essential function of trans-translation. The polypeptide is SsrA-binding protein (Enterococcus faecalis (strain ATCC 700802 / V583)).